Consider the following 432-residue polypeptide: Adenylosuccinate synthetase (432 aa).

GTP-binding positions include 13–19 (GDEGKGK) and 41–43 (GHT). The active-site Proton acceptor is the Asp14. Residues Asp14 and Gly41 each contribute to the Mg(2+) site. Residues 14–17 (DEGK), 39–42 (NAGH), Thr131, Arg145, Gln226, Thr241, and Arg305 each bind IMP. The Proton donor role is filled by His42. Position 301-307 (301-307 (SVTGRAR)) interacts with substrate. GTP-binding positions include Arg307, 333-335 (KLD), and 416-418 (STG).

It belongs to the adenylosuccinate synthetase family. In terms of assembly, homodimer. It depends on Mg(2+) as a cofactor.

The protein localises to the cytoplasm. It catalyses the reaction IMP + L-aspartate + GTP = N(6)-(1,2-dicarboxyethyl)-AMP + GDP + phosphate + 2 H(+). It functions in the pathway purine metabolism; AMP biosynthesis via de novo pathway; AMP from IMP: step 1/2. Its function is as follows. Plays an important role in the de novo pathway of purine nucleotide biosynthesis. Catalyzes the first committed step in the biosynthesis of AMP from IMP. The polypeptide is Adenylosuccinate synthetase (Neisseria gonorrhoeae (strain ATCC 700825 / FA 1090)).